The sequence spans 353 residues: UDP-3-O-acylglucosamine N-acyltransferase (353 aa).

H242 functions as the Proton acceptor in the catalytic mechanism.

Belongs to the transferase hexapeptide repeat family. LpxD subfamily. As to quaternary structure, homotrimer.

It catalyses the reaction a UDP-3-O-[(3R)-3-hydroxyacyl]-alpha-D-glucosamine + a (3R)-hydroxyacyl-[ACP] = a UDP-2-N,3-O-bis[(3R)-3-hydroxyacyl]-alpha-D-glucosamine + holo-[ACP] + H(+). It functions in the pathway bacterial outer membrane biogenesis; LPS lipid A biosynthesis. In terms of biological role, catalyzes the N-acylation of UDP-3-O-acylglucosamine using 3-hydroxyacyl-ACP as the acyl donor. Is involved in the biosynthesis of lipid A, a phosphorylated glycolipid that anchors the lipopolysaccharide to the outer membrane of the cell. The polypeptide is UDP-3-O-acylglucosamine N-acyltransferase (Pseudomonas aeruginosa (strain LESB58)).